Here is a 164-residue protein sequence, read N- to C-terminus: N5-carboxyaminoimidazole ribonucleotide mutase (164 aa).

Substrate-binding residues include S13, D16, and R43.

The protein belongs to the AIR carboxylase family. Class I subfamily.

It carries out the reaction 5-carboxyamino-1-(5-phospho-D-ribosyl)imidazole + H(+) = 5-amino-1-(5-phospho-D-ribosyl)imidazole-4-carboxylate. Its pathway is purine metabolism; IMP biosynthesis via de novo pathway; 5-amino-1-(5-phospho-D-ribosyl)imidazole-4-carboxylate from 5-amino-1-(5-phospho-D-ribosyl)imidazole (N5-CAIR route): step 2/2. Functionally, catalyzes the conversion of N5-carboxyaminoimidazole ribonucleotide (N5-CAIR) to 4-carboxy-5-aminoimidazole ribonucleotide (CAIR). The protein is N5-carboxyaminoimidazole ribonucleotide mutase of Haemophilus influenzae (strain ATCC 51907 / DSM 11121 / KW20 / Rd).